Consider the following 575-residue polypeptide: Acetylcholine receptor subunit beta-type acr-2 (575 aa).

The signal sequence occupies residues 1 to 20 (MKKTVKILLILITVFLKVHC). Residues 21–270 (NGGHDDEAAD…IRRKTLFYTV (250 aa)) lie on the Extracellular side of the membrane. The tract at residues 31-57 (FLSHTNIDDPNNSSDPNKNSDQGDTMG) is disordered. The segment covering 38–50 (DDPNNSSDPNKNS) has biased composition (low complexity). 4 N-linked (GlcNAc...) asparagine glycosylation sites follow: Asn41, Asn42, Asn80, and Asn131. The cysteines at positions 185 and 199 are disulfide-linked. 3 consecutive transmembrane segments (helical) span residues 271-291 (ILII…YLPV), 299-319 (LTIS…KILP), and 331-351 (LLLA…IVNI). Topologically, residues 352–527 (YFRSALSHKM…WKYVAMVLDR (176 aa)) are cytoplasmic. Residues 528 to 548 (LILLIFFGVTLGGTLGIICSA) form a helical membrane-spanning segment.

It belongs to the ligand-gated ion channel (TC 1.A.9) family. Acetylcholine receptor (TC 1.A.9.1) subfamily. In terms of assembly, component of nicotinic acetylcholine receptor. In cholinergic motoneurons, composed of 2 non-alpha subunits acr-2 and acr-3, and 3 alpha subunits unc-38, unc-63 and acr-12. In terms of tissue distribution, specifically expressed in cholinergic ventral cord motoneurons of the VA, VB, DA and DB classes but not AS and VC classes. Expressed in PVQ and DVC neurons in the tail.

It localises to the postsynaptic cell membrane. Its subcellular location is the cell membrane. Functionally, non-alpha subunit of nicotinic acetylcholine receptor (nAChR). Acts in cholinergic motoneurons to regulate presynaptic neurotransmitter release, thereby ensuring normal level of excitation of cholinergic motoneurons during locomotion. This chain is Acetylcholine receptor subunit beta-type acr-2 (acr-2), found in Caenorhabditis elegans.